The following is a 176-amino-acid chain: Ribosome maturation factor RimM (176 aa).

A PRC barrel domain is found at 97–176 (EDEFYWRDLI…QILVDWDPDF (80 aa)).

This sequence belongs to the RimM family. In terms of assembly, binds ribosomal protein uS19.

Its subcellular location is the cytoplasm. Its function is as follows. An accessory protein needed during the final step in the assembly of 30S ribosomal subunit, possibly for assembly of the head region. Essential for efficient processing of 16S rRNA. May be needed both before and after RbfA during the maturation of 16S rRNA. It has affinity for free ribosomal 30S subunits but not for 70S ribosomes. In Shewanella sp. (strain MR-4), this protein is Ribosome maturation factor RimM.